The sequence spans 111 residues: Class I hydrophobin 10 (111 aa).

Residues 1 to 17 form the signal peptide; it reads MLFNTFVVTALASLAAA. Cystine bridges form between C30–C90, C37–C84, C38–C71, and C91–C104.

Belongs to the fungal hydrophobin family. As to quaternary structure, self-assembles to form functional amyloid fibrils called rodlets. Self-assembly into fibrillar rodlets occurs spontaneously at hydrophobic:hydrophilic interfaces and the rodlets further associate laterally to form amphipathic monolayers.

Its subcellular location is the secreted. The protein localises to the cell wall. In terms of biological role, aerial growth, conidiation, and dispersal of filamentous fungi in the environment rely upon a capability of their secreting small amphipathic proteins called hydrophobins (HPBs) with low sequence identity. Class I can self-assemble into an outermost layer of rodlet bundles on aerial cell surfaces, conferring cellular hydrophobicity that supports fungal growth, development and dispersal; whereas Class II form highly ordered films at water-air interfaces through intermolecular interactions but contribute nothing to the rodlet structure. This is Class I hydrophobin 10 from Pleurotus ostreatus (strain PC15) (Oyster mushroom).